The following is a 160-amino-acid chain: SKP1-like protein 1A (160 aa).

Residues 102–160 (ILAANYLNIKNLLDLTCQTVADMIKGKTPEEIRTTFNIKNDFTPEEEEEVRRENQWAFE) are interaction with the F-box domain of F-box proteins.

It belongs to the SKP1 family. As to quaternary structure, part of a SCF E3 ubiquitin ligase complex composed of SKP1, CUL1, RBX1 (RBX1A or RBX1B) and F-box proteins. Interacts with SKIP1, SKIP2, SKIP3, SKIP4, SKIP6, FIB1/SKIP7, SKIP8, PP2A11/SKIP10, SKIP11, PP2B11/SKIP12, PP2A14/SKIP13, SKIP14, SKIP15, SKIP16, SKIP19/FBL20, SKIP20, PP2B1/SKIP21, SKIP22, SKIP23, SKIP24, SKIP25, TULP10/SKIP26, SKIP27, SKIP28/MEE11, AFR/SKIP29, SKIP30, SKIP31, SKIP32/FBP7, SKIP33, SKIP35, ADO1/ZTL, ADO2/LKP2, ADO3/FKF1, AFR, COI1, DOR, EBF1, EBF2, EID1, ORE9, PP2A13/SKIP9, TIR1, UFO, SKP2A, CPR1/CPR30, FBL17, NUP58, At1g55000, At1g67340, At1g78100, At3g04660, At3g61590, At4g38940 and At5g49610. The SKP1A subunit of the SCF E3 ubiquitin ligase complex can interact directly with KIN10, KIN11 and the proteasome subunit PAD1. This interaction can be disrupted by PRL1. In case of polerovirus infection, part of a SCF P0 complex composed of the viral silencing suppressor P0, SKP1 and CUL1. Interacts with turnip yellows virus P0. Interacts with VBF and Agrobacterium virF. Binds to KIB1. Accumulates only in meristematic cells. Expressed in inflorescence, shoot and root apical meristems, as well as in developing organs such as gametocytes and seeds. Also detected in cortical layer and epidermis of roots, leaves, pith and vascular bundle of young stem, young floral buds and organ primordia, pollen and through the valve of siliques. Not detectable in mature root tissues.

It is found in the nucleus. It localises to the cytoplasm. The protein localises to the cytoskeleton. The protein resides in the spindle. Its subcellular location is the phragmoplast. The protein operates within protein modification; protein ubiquitination. Its function is as follows. Involved in ubiquitination and subsequent proteasomal degradation of target proteins. Together with CUL1, RBX1 and a F-box protein, it forms a SCF E3 ubiquitin ligase complex. The functional specificity of this complex depends on the type of F-box protein. In the SCF complex, it serves as an adapter that links the F-box protein to CUL1. SCF(UFO) is required for vegetative and floral organ development as well as for male gametogenesis. SCF(TIR1) is involved in auxin signaling pathway. SCF(COI1) regulates responses to jasmonates. SCF(EID1) and SCF(AFR) are implicated in phytochrome A light signaling. SCF(ADO1), SCF(ADO2), SCF(ADO3) are related to the circadian clock. SCF(ORE9) seems to be involved in senescence. SCF(EBF1/EBF2) may regulate ethylene signaling. Plays a role during embryogenesis and early postembryonic development, especially during cell elongation and division. Contributes to the correct chromosome segregation during tetrad formation. The polypeptide is SKP1-like protein 1A (Arabidopsis thaliana (Mouse-ear cress)).